The primary structure comprises 470 residues: L-seryl-tRNA(Sec) selenium transferase (470 aa).

At lysine 294 the chain carries N6-(pyridoxal phosphate)lysine.

This sequence belongs to the SelA family. Pyridoxal 5'-phosphate is required as a cofactor.

The protein localises to the cytoplasm. The enzyme catalyses L-seryl-tRNA(Sec) + selenophosphate + H(+) = L-selenocysteinyl-tRNA(Sec) + phosphate. It participates in aminoacyl-tRNA biosynthesis; selenocysteinyl-tRNA(Sec) biosynthesis; selenocysteinyl-tRNA(Sec) from L-seryl-tRNA(Sec) (bacterial route): step 1/1. Functionally, converts seryl-tRNA(Sec) to selenocysteinyl-tRNA(Sec) required for selenoprotein biosynthesis. The chain is L-seryl-tRNA(Sec) selenium transferase from Solidesulfovibrio magneticus (strain ATCC 700980 / DSM 13731 / RS-1) (Desulfovibrio magneticus).